Here is a 227-residue protein sequence, read N- to C-terminus: uncharacterized protein (227 aa).

17–24 (GKTGCGKT) provides a ligand contact to ATP.

This is an uncharacterized protein from Methanocaldococcus jannaschii (strain ATCC 43067 / DSM 2661 / JAL-1 / JCM 10045 / NBRC 100440) (Methanococcus jannaschii).